Reading from the N-terminus, the 91-residue chain is Putative septation protein SpoVG (91 aa).

It belongs to the SpoVG family.

Functionally, could be involved in septation. This chain is Putative septation protein SpoVG, found in Clostridium botulinum (strain Alaska E43 / Type E3).